Here is a 142-residue protein sequence, read N- to C-terminus: Neuritin (142 aa).

Positions 1–27 (MGLKLNGRYISLILAVQIAYLVQAVRA) are cleaved as a signal peptide. Glycine 116 carries the GPI-anchor amidated glycine lipid modification. Residues 117–142 (AAGSLLPAFPVLLVSLSAALATWLSF) constitute a propeptide, removed in mature form.

This sequence belongs to the neuritin family. In terms of assembly, component of the outer core of AMPAR complex. AMPAR complex consists of an inner core made of 4 pore-forming GluA/GRIA proteins (GRIA1, GRIA2, GRIA3 and GRIA4) and 4 major auxiliary subunits arranged in a twofold symmetry. One of the two pairs of distinct binding sites is occupied either by CNIH2, CNIH3 or CACNG2, CACNG3. The other harbors CACNG2, CACNG3, CACNG4, CACNG8 or GSG1L. This inner core of AMPAR complex is complemented by outer core constituents binding directly to the GluA/GRIA proteins at sites distinct from the interaction sites of the inner core constituents. Outer core constituents include at least PRRT1, PRRT2, CKAMP44/SHISA9, FRRS1L and NRN1. The proteins of the inner and outer core serve as a platform for other, more peripherally associated AMPAR constituents. Alone or in combination, these auxiliary subunits control the gating and pharmacology of the AMPAR complex and profoundly impact their biogenesis and protein processing.

It localises to the cell membrane. Its subcellular location is the synapse. Promotes neurite outgrowth and especially branching of neuritic processes in primary hippocampal and cortical cells. In Homo sapiens (Human), this protein is Neuritin (NRN1).